The primary structure comprises 287 residues: PAK4-inhibitor INKA1 (287 aa).

Disordered stretches follow at residues G22–D59 and S138–P157. The span at Q35–L50 shows a compositional bias: polar residues. Over residues S138–P147 the composition is skewed to low complexity. Inka box regions lie at residues E168 to E205 and P261 to L287.

It belongs to the INKA family. In terms of assembly, interacts with PAK4.

It localises to the nucleus. The protein resides in the cytoplasm. Inhibitor of the serine/threonine-protein kinase PAK4. Acts by binding PAK4 in a substrate-like manner, inhibiting the protein kinase activity. This is PAK4-inhibitor INKA1 from Homo sapiens (Human).